The sequence spans 161 residues: Beta-lactoglobulin-2 (161 aa).

2 disulfides stabilise this stretch: cysteine 66/cysteine 159 and cysteine 106/cysteine 119.

This sequence belongs to the calycin superfamily. Lipocalin family. As to quaternary structure, monomer. As to expression, synthesized in mammary gland and secreted in milk.

The protein localises to the secreted. Functionally, primary component of whey, it binds retinol and is probably involved in the transport of that molecule. This Canis lupus familiaris (Dog) protein is Beta-lactoglobulin-2 (LGB2).